Consider the following 143-residue polypeptide: Small ribosomal subunit protein uS12 (143 aa).

Basic residues predominate over residues 1 to 19 (MGKPRGIRTARKHVNHRRE). The interval 1-21 (MGKPRGIRTARKHVNHRREQR) is disordered. Residue proline 62 is modified to Hydroxyproline.

Belongs to the universal ribosomal protein uS12 family. In terms of assembly, component of the 40S small ribosomal subunit.

The protein resides in the cytoplasm. It localises to the cytosol. The protein localises to the rough endoplasmic reticulum. The sequence is that of Small ribosomal subunit protein uS12 (RpS23) from Papilio dardanus (African swallowtail butterfly).